The following is a 195-amino-acid chain: MPDINESMLNQFRPVIRRFIDPIADRIALPADYITLTGFLVACAASAGYASGSLITGAALLAASGFIDVLDGAVARRRFRPTAFGGFLDSTLDRLSDGIIIIGITAGGFTGLLTGLLALHSGLMVSYVRARAESLGIECAVGIAERAERIIIILAGSLAGYLIHPWFMDAAIIVLAALGYFTMIQRMIYVWQRLK.

Transmembrane regions (helical) follow at residues 27–47 (IALP…AASA) and 54–74 (LITG…DGAV). Mg(2+) is bound by residues Asp68, Asp71, Asp89, and Asp93. Catalysis depends on Asp93, which acts as the Proton acceptor. 2 helical membrane passes run 99 to 119 (IIII…LLAL) and 158 to 178 (LAGY…LAAL).

Belongs to the CDP-alcohol phosphatidyltransferase class-I family. Mn(2+) serves as cofactor. The cofactor is Mg(2+).

It is found in the cell membrane. It carries out the reaction CDP-2,3-bis-O-(phytanyl)-sn-glycerol + 1D-myo-inositol 3-phosphate = saturated 1-archaetidyl-1D-myo-inositol 3-phosphate + CMP + H(+). The protein operates within lipid metabolism; phospholipid metabolism. Catalyzes the formation of archaetidylinositol phosphate (AIP) from CDP-archaeol (CDP-ArOH or CDP-2,3-bis-(O-phytanyl)-sn-glycerol) and 1L-myo-inositol 1-phosphate (IP or 1D-myo-inositol 3-phosphate). AIP is a precursor of archaetidyl-myo-inositol (AI), an ether-type inositol phospholipid ubiquitously distributed in archaea membranes and essential for glycolipid biosynthesis in archaea. The polypeptide is Archaetidylinositol phosphate synthase (Methanothermobacter thermautotrophicus (strain ATCC 29096 / DSM 1053 / JCM 10044 / NBRC 100330 / Delta H) (Methanobacterium thermoautotrophicum)).